The following is a 185-amino-acid chain: MLNEIQQNSQNKMNKSINSLKNAFSKIRASRAHPSLLEQIHINYYGSMVPLSQVANISTEDSRTLKASPWEKDMVSVIEKAIMTSDLGLNPQTIGQVIRIHLPPLTQERRGELVKIIKDEAEKAKIAIRNIRRDANSDFKELLKEKEISKDEARKAEYDIQKITDEYIKKIEINLNKKEDSLLEI.

It belongs to the RRF family.

Its subcellular location is the cytoplasm. Its function is as follows. Responsible for the release of ribosomes from messenger RNA at the termination of protein biosynthesis. May increase the efficiency of translation by recycling ribosomes from one round of translation to another. The polypeptide is Ribosome-recycling factor (Vesicomyosocius okutanii subsp. Calyptogena okutanii (strain HA)).